Consider the following 280-residue polypeptide: uncharacterized protein (280 aa).

The N-terminal 51 residues, 1–51 (MATSLLLRHSSAVFFSQSSFFTKNKSFRSFTSIKMEKGEAENAVKTKKVFV), are a transit peptide targeting the chloroplast.

This sequence belongs to the NAD(P)-dependent epimerase/dehydratase family.

The protein resides in the plastid. It is found in the chloroplast. The protein localises to the plastoglobule. This is an uncharacterized protein from Arabidopsis thaliana (Mouse-ear cress).